We begin with the raw amino-acid sequence, 453 residues long: MSQLNPKVGFVSLGCPKALVDSERILTQLRSEGYDIVPSYDSADVVVVNTCGFIDSAVTESLDAIGEAMNQNGKVIVTGCLGKRPEQIREAYPNVLAVSGPQDYQSVMEAVHEALPPKHDPFVDLVPDYGIKLTPRHYAYLKISEGCNHKCSFCIIPSMRGKLVSRPVDEVLREAERLVRGGVRELLVVSQDTSAYGVDVKYAEKMWRNKAYQTRLKALCEGLSELDAWVRMHYVYPYPHVDEVVPLMAENRILPYLDIPFQHASPRILRLMKRPGAVEKTLERVQNWRRIAPDITVRSTFIVGFPGETEAEFEELLSFLDEAQLDRVGAFAYSPVEGATANDLPDAVPEEVKQERLARFMEKQAQISAARLEAKIGTVQQCLVDAIEGDIAVARSKADAPEIDGLVHIQNADQVPLRVGEFVDVEITESDEHDLYGDALPAATRPAFDLKML.

Residues Pro6–Pro116 enclose the MTTase N-terminal domain. Residues Cys15, Cys51, Cys80, Cys147, Cys151, and Cys154 each coordinate [4Fe-4S] cluster. A Radical SAM core domain is found at Leu133–Ala370. Residues Glu373 to Pro441 form the TRAM domain.

Belongs to the methylthiotransferase family. RimO subfamily. The cofactor is [4Fe-4S] cluster.

Its subcellular location is the cytoplasm. It carries out the reaction L-aspartate(89)-[ribosomal protein uS12]-hydrogen + (sulfur carrier)-SH + AH2 + 2 S-adenosyl-L-methionine = 3-methylsulfanyl-L-aspartate(89)-[ribosomal protein uS12]-hydrogen + (sulfur carrier)-H + 5'-deoxyadenosine + L-methionine + A + S-adenosyl-L-homocysteine + 2 H(+). In terms of biological role, catalyzes the methylthiolation of an aspartic acid residue of ribosomal protein uS12. The polypeptide is Ribosomal protein uS12 methylthiotransferase RimO (Stenotrophomonas maltophilia (strain K279a)).